The sequence spans 227 residues: Class I hydrophobin 4 (227 aa).

The signal sequence occupies residues 1–18; it reads MQFTTFALLAVAAATASA. Intrachain disulfides connect cysteine 159-cysteine 207, cysteine 167-cysteine 200, cysteine 168-cysteine 186, and cysteine 208-cysteine 222. Residues asparagine 190 and asparagine 219 are each glycosylated (N-linked (GlcNAc...) asparagine).

The protein belongs to the fungal hydrophobin family. In terms of assembly, self-assembles to form functional amyloid fibrils called rodlets. Self-assembly into fibrillar rodlets occurs spontaneously at hydrophobic:hydrophilic interfaces and the rodlets further associate laterally to form amphipathic monolayers. As to expression, expressed in conidia and aerial hyphae.

Its subcellular location is the secreted. It is found in the cell wall. Functionally, aerial growth, conidiation, and dispersal of filamentous fungi in the environment rely upon a capability of their secreting small amphipathic proteins called hydrophobins (HPBs) with low sequence identity. Class I can self-assemble into an outermost layer of rodlet bundles on aerial cell surfaces, conferring cellular hydrophobicity that supports fungal growth, development and dispersal; whereas Class II form highly ordered films at water-air interfaces through intermolecular interactions but contribute nothing to the rodlet structure. Hcf-4 is a class I hydrophobin that is involved in the development and germination of conidia. In Passalora fulva (Tomato leaf mold), this protein is Class I hydrophobin 4.